A 394-amino-acid chain; its full sequence is Elongation factor Tu (394 aa).

Positions 10-204 constitute a tr-type G domain; the sequence is KPHVNIGTIG…AVDSYIPQPV (195 aa). The segment at 19-26 is G1; it reads GHVDHGKT. 19 to 26 lines the GTP pocket; that stretch reads GHVDHGKT. Thr-26 lines the Mg(2+) pocket. Positions 60–64 are G2; sequence GITIS. Positions 81–84 are G3; it reads DCPG. GTP contacts are provided by residues 81 to 85 and 136 to 139; these read DCPGH and NKVD. Positions 136–139 are G4; sequence NKVD. Residues 174 to 176 are G5; it reads SAL.

The protein belongs to the TRAFAC class translation factor GTPase superfamily. Classic translation factor GTPase family. EF-Tu/EF-1A subfamily. Monomer.

Its subcellular location is the cytoplasm. It carries out the reaction GTP + H2O = GDP + phosphate + H(+). GTP hydrolase that promotes the GTP-dependent binding of aminoacyl-tRNA to the A-site of ribosomes during protein biosynthesis. In Rickettsia parkeri, this protein is Elongation factor Tu.